The chain runs to 809 residues: TLR4 interactor with leucine rich repeats (809 aa).

A signal peptide spans 1-25 (MEGVGAVRFWLVVCGCLAFPPRAES). The region spanning 26-57 (VCPERCDCQHPQHLLCTNRGLRAVPKTSSLPS) is the LRRNT domain. Over 26-694 (VCPERCDCQH…AGGRGGVDYQ (669 aa)) the chain is Extracellular. 12 LRR repeats span residues 61–81 (VLTY…DFHR), 84–105 (QLRR…TFEK), 108–129 (RLEE…TLAP), 132–153 (KLRI…SFEG), 156–177 (SLVK…VFAP), 180–201 (NLLY…AFSQ), 204–223 (KLRF…RHAA), 230–251 (SLST…VFQH), 254–275 (RLGL…AFWG), 278–298 (ALRE…TLLE), 302–323 (SLEA…TFGH), and 326–347 (RLRE…IFAA). The N-linked (GlcNAc...) asparagine glycan is linked to Asn-73. An LRRCT domain is found at 359-416 (NGWTCDCRLRGLKRWMGNWHSQGRLLTVFVQCRHPPALRGKYLDYLDDQLLQNGSCVD). The N-linked (GlcNAc...) asparagine glycan is linked to Asn-411. Disordered regions lie at residues 412 to 462 (GSCV…RGRL) and 483 to 563 (RLSR…SAVQ). The segment covering 421–436 (PTAGSRQWPLPTSSEE) has biased composition (polar residues). The segment covering 488-506 (GPGPHQGPSAAAPGSAPQS) has biased composition (low complexity). The span at 521–543 (ANLSQTEPTPTSEPASGTPSARD) shows a compositional bias: polar residues. Residues 554 to 563 (ASEQQESAVQ) are compositionally biased toward low complexity. N-linked (GlcNAc...) asparagine glycosylation is present at Asn-587. Residues 695–715 (LLTLVLLAVNALLVLLALAAW) form a helical membrane-spanning segment. Over 716–809 (GSRWLRRKLR…EDHLLQRFAD (94 aa)) the chain is Cytoplasmic. Residue Ser-796 is modified to Phosphoserine.

As to quaternary structure, belongs to the lipopolysaccharide (LPS) receptor, a multi-protein complex containing at least CD14, MD-2 and TLR4. Interacts with TLR4; this interaction is greatly enhanced by LPS stimulation. Interacts with LPS. N-glycolysaled. In terms of tissue distribution, highly expressed in brain, spinal cord and lung.

Its subcellular location is the membrane. Its function is as follows. Component of the TLR4 signaling complex. Mediates the innate immune response to bacterial lipopolysaccharide (LPS) leading to cytokine secretion. This Mus musculus (Mouse) protein is TLR4 interactor with leucine rich repeats (Tril).